A 436-amino-acid polypeptide reads, in one-letter code: Serine/threonine-protein kinase 40 (436 aa).

Over residues 1–10 (MKRRASDRGA) the composition is skewed to basic and acidic residues. Positions 1–25 (MKRRASDRGAGETSARAKALGSGIS) are disordered. Positions 35–332 (FILGPRLGNS…DVLEALSSII (298 aa)) constitute a Protein kinase domain. ATP is bound by residues 41-49 (LGNSPVPSI) and Lys66. Residue Asp197 is the Proton acceptor of the active site. Residues 396 to 417 (RSWVPKRQSGAGVPPVRRLGHD) are disordered.

The protein belongs to the protein kinase superfamily. CAMK Ser/Thr protein kinase family.

Its subcellular location is the nucleus. It localises to the cytoplasm. The catalysed reaction is L-seryl-[protein] + ATP = O-phospho-L-seryl-[protein] + ADP + H(+). The enzyme catalyses L-threonyl-[protein] + ATP = O-phospho-L-threonyl-[protein] + ADP + H(+). In terms of biological role, may be a negative regulator of NF-kappa-B and p53-mediated gene transcription. The sequence is that of Serine/threonine-protein kinase 40 (STK40) from Bos taurus (Bovine).